Reading from the N-terminus, the 385-residue chain is Trichodiene synthase (385 aa).

Belongs to the trichodiene synthase family.

It catalyses the reaction (2E,6E)-farnesyl diphosphate = trichodiene + diphosphate. Its pathway is sesquiterpene biosynthesis; trichothecene biosynthesis. Its function is as follows. TS is a member of the terpene cyclase group of enzymes. It catalyzes the isomerization and cyclization of farnesyl pyro-phosphate to form trichodiene, the first cyclic intermediate in the biosynthetic pathway for trichothecenes. It serves to branch trichothecene biosynthesis from the isoprenoid pathway. The sequence is that of Trichodiene synthase (TRI5) from Paramyrothecium roridum (Myrothecium leaf spot fungus).